The chain runs to 230 residues: Cytidylate kinase (230 aa).

Residue glycine 12–threonine 20 coordinates ATP.

Belongs to the cytidylate kinase family. Type 1 subfamily.

It localises to the cytoplasm. It catalyses the reaction CMP + ATP = CDP + ADP. The catalysed reaction is dCMP + ATP = dCDP + ADP. This is Cytidylate kinase from Shewanella sp. (strain MR-7).